Here is a 397-residue protein sequence, read N- to C-terminus: MKELLLLYSGGLDTSVMIKWMNENLGYDVSTLTLDIGNNDLKSIREKAEAIGAVETFVEDVKQEFSYEYISKSILANGSYEGYPLSTALARPLMAKKAVELAEKHGFEAIAHGSTGRGNDQVRFELGIKALNPSLEMLAPVRDWNMLRSEEIEYAKKNNIIVPSDGKYSVDENLWGRSIEGSEIENMSLPVPEDAYEWLVPPWEAGPGEVIKLEFSNGLPVAINDSDFELQNLIANLNIIGGRNSIGLIDHVEDRITGIKSREVYECPAAEIITYAHGYLESLILNKHEISIKSFLDSKFSQFVYNGLWYDPAMKPLIAGEEILNSEINGSISLKLYKGKIYFNGSKGANFSYNSNVANYSTYEFDQKSSKGFIDIFKNDTVYSILARQKAKEEALS.

7-15 (LYSGGLDTS) lines the ATP pocket. Tyr83 contacts L-citrulline. Gly113 lines the ATP pocket. Residues Thr115, Asn119, and Asp120 each contribute to the L-aspartate site. Residue Asn119 coordinates L-citrulline. L-citrulline is bound by residues Arg123, Ser169, Ser178, Glu253, and Tyr265.

The protein belongs to the argininosuccinate synthase family. Type 1 subfamily. As to quaternary structure, homotetramer.

The protein localises to the cytoplasm. It carries out the reaction L-citrulline + L-aspartate + ATP = 2-(N(omega)-L-arginino)succinate + AMP + diphosphate + H(+). It participates in amino-acid biosynthesis; L-arginine biosynthesis; L-arginine from L-ornithine and carbamoyl phosphate: step 2/3. The polypeptide is Argininosuccinate synthase (Thermoplasma volcanium (strain ATCC 51530 / DSM 4299 / JCM 9571 / NBRC 15438 / GSS1)).